We begin with the raw amino-acid sequence, 456 residues long: uncharacterized protein (456 aa).

2 stretches are compositionally biased toward basic and acidic residues: residues 181-210 (DQRKESIVNDERKKNPEFREKPDKNEDKKV) and 217-231 (KEIENKGIDHEENEE). The segment at 181–231 (DQRKESIVNDERKKNPEFREKPDKNEDKKVKPPPSLKEIENKGIDHEENEE) is disordered. Residues 216 to 248 (LKEIENKGIDHEENEEDKKRELMFKLQLLQKQY) adopt a coiled-coil conformation. A helical membrane pass occupies residues 347–365 (LALAILFNAVWFIAAKMIM). The span at 383 to 407 (NKSGTTPNSVSPRTWGNSKSPQSEF) shows a compositional bias: polar residues. The disordered stretch occupies residues 383-456 (NKSGTTPNSV…MREQGIETLK (74 aa)). Basic and acidic residues predominate over residues 441 to 456 (DESRREMREQGIETLK).

Belongs to the IIV-6 067R family.

It localises to the membrane. This is an uncharacterized protein from Invertebrate iridescent virus 6 (IIV-6).